A 450-amino-acid chain; its full sequence is UDP-N-acetylmuramoylalanine--D-glutamate ligase (450 aa).

119-125 provides a ligand contact to ATP; that stretch reads GSNGKTT.

The protein belongs to the MurCDEF family.

Its subcellular location is the cytoplasm. It carries out the reaction UDP-N-acetyl-alpha-D-muramoyl-L-alanine + D-glutamate + ATP = UDP-N-acetyl-alpha-D-muramoyl-L-alanyl-D-glutamate + ADP + phosphate + H(+). It functions in the pathway cell wall biogenesis; peptidoglycan biosynthesis. In terms of biological role, cell wall formation. Catalyzes the addition of glutamate to the nucleotide precursor UDP-N-acetylmuramoyl-L-alanine (UMA). This Streptococcus pneumoniae serotype 19F (strain G54) protein is UDP-N-acetylmuramoylalanine--D-glutamate ligase.